Consider the following 215-residue polypeptide: Deoxyribose-phosphate aldolase (215 aa).

Asp89 serves as the catalytic Proton donor/acceptor. Lys150 functions as the Schiff-base intermediate with acetaldehyde in the catalytic mechanism. The Proton donor/acceptor role is filled by Lys174.

This sequence belongs to the DeoC/FbaB aldolase family. DeoC type 1 subfamily.

It is found in the cytoplasm. The catalysed reaction is 2-deoxy-D-ribose 5-phosphate = D-glyceraldehyde 3-phosphate + acetaldehyde. It functions in the pathway carbohydrate degradation; 2-deoxy-D-ribose 1-phosphate degradation; D-glyceraldehyde 3-phosphate and acetaldehyde from 2-deoxy-alpha-D-ribose 1-phosphate: step 2/2. Functionally, catalyzes a reversible aldol reaction between acetaldehyde and D-glyceraldehyde 3-phosphate to generate 2-deoxy-D-ribose 5-phosphate. This Natronomonas pharaonis (strain ATCC 35678 / DSM 2160 / CIP 103997 / JCM 8858 / NBRC 14720 / NCIMB 2260 / Gabara) (Halobacterium pharaonis) protein is Deoxyribose-phosphate aldolase.